We begin with the raw amino-acid sequence, 212 residues long: Thymidylate kinase (212 aa).

Position 11-18 (glycine 11–serine 18) interacts with ATP.

Belongs to the thymidylate kinase family.

The enzyme catalyses dTMP + ATP = dTDP + ADP. Functionally, phosphorylation of dTMP to form dTDP in both de novo and salvage pathways of dTTP synthesis. The sequence is that of Thymidylate kinase from Vibrio vulnificus (strain CMCP6).